A 360-amino-acid chain; its full sequence is Small ribosomal subunit protein bS1m (360 aa).

The segment covering Met-1–Ile-15 has biased composition (low complexity). Residues Met-1–Lys-31 are disordered.

Belongs to the bacterial ribosomal protein bS1 family. In terms of assembly, component of the mitochondrial small ribosomal subunit.

The protein resides in the mitochondrion. Its function is as follows. Involved in mitochondrial genome encoded proteins translation. In Eremothecium gossypii (strain ATCC 10895 / CBS 109.51 / FGSC 9923 / NRRL Y-1056) (Yeast), this protein is Small ribosomal subunit protein bS1m (MRP51).